A 334-amino-acid polypeptide reads, in one-letter code: MRGPSWSRPRPLLLLLLLLSPWPVWAQVSATASPSGSLGAPDCPEVCTCVPGGLASCSALSLPAVPPGLSLRLRALLLDHNRVRALPPGAFAGAGALQRLDLRENGLHSVHVRAFWGLGALQLLDLSANQLEALAPGTFAPLRALRNLSLAGNRLARLEPAALGALPLLRSLSLQDNELAALAPGLLGRLPALDALHLRGNPWGCGCALRPLCAWLRRHPLPASEAETVLCVWPGRLTLSPLTAFSDAAFSHCAQPLALRDLAVVYTLGPASFLVSLASCLALGSGLTACRARRRRLRTAALRPPRPPDPNPDPDPHGCASPADPGSPAAAAQA.

An N-terminal signal peptide occupies residues 1 to 26; that stretch reads MRGPSWSRPRPLLLLLLLLSPWPVWA. The Extracellular segment spans residues 27–261; the sequence is QVSATASPSG…HCAQPLALRD (235 aa). The region spanning 34–71 is the LRRNT domain; it reads PSGSLGAPDCPEVCTCVPGGLASCSALSLPAVPPGLSL. Disulfide bonds link C43–C49 and C47–C57. LRR repeat units follow at residues 72-93, 96-117, 120-141, 144-167, and 168-190; these read RLRALLLDHNRVRALPPGAFAG, ALQRLDLRENGLHSVHVRAFWG, ALQLLDLSANQLEALAPGTFAP, ALRNLSLAGNRLARLEPAALGALP, and LLRSLSLQDNELAALAPGLLGRL. An N-linked (GlcNAc...) asparagine glycan is attached at N147. An LRRCT domain is found at 201–255; that stretch reads NPWGCGCALRPLCAWLRRHPLPASEAETVLCVWPGRLTLSPLTAFSDAAFSHCAQ. Cystine bridges form between C205/C231 and C207/C253. The helical transmembrane segment at 262 to 282 threads the bilayer; sequence LAVVYTLGPASFLVSLASCLA. Residues 283–334 are Cytoplasmic-facing; that stretch reads LGSGLTACRARRRRLRTAALRPPRPPDPNPDPDPHGCASPADPGSPAAAAQA. The interval 298 to 334 is disordered; sequence RTAALRPPRPPDPNPDPDPHGCASPADPGSPAAAAQA. A compositionally biased stretch (pro residues) spans 304–313; it reads PPRPPDPNPD. Residues 320–334 show a composition bias toward low complexity; the sequence is ASPADPGSPAAAAQA.

In terms of assembly, interacts with KCNMA1. Isoform 1 is expressed highly in normal prostate and salivary gland, very weakly in colon, pancreas, and intestine, and not at all in other tissues. Isoform 1 is expressed highly in many cancer cell lines and in breast cancer, pancreatic cancer and colon cancer. Isoform 2 is expressed in cancer cell lines.

Its subcellular location is the cell membrane. It localises to the cytoplasm. It is found in the cytoskeleton. In terms of biological role, auxiliary protein of the large-conductance, voltage and calcium-activated potassium channel (BK alpha). Required for the conversion of BK alpha channels from a high-voltage to a low-voltage activated channel type in non-excitable cells. These are characterized by negative membrane voltages and constant low levels of calcium. The sequence is that of Leucine-rich repeat-containing protein 26 (LRRC26) from Homo sapiens (Human).